The chain runs to 217 residues: MSGGLAPSKSTVYVSNLPFSLTNNDLYRIFSKYGKVVKVTIMKDKDTRKSKGVAFILFLDKDSALNCTRAINNKQLFGRVIKASIAIDNGRAAEFIRRRNYFDKSKCYECGESGHLSYACPKNMLGEREPPKKKEKKKKRKLPEPEEEIEEVEVSEEEGEDPALDSLSQAIAFQQAKIEEEQSKWRPNPGGPSTSDDSRRPRIKKSAYFSDEEELSD.

An RRM domain is found at 10-88 (STVYVSNLPF…RVIKASIAID (79 aa)). The CCHC-type zinc-finger motif lies at 105-122 (SKCYECGESGHLSYACPK). The tract at residues 120 to 217 (CPKNMLGERE…YFSDEEELSD (98 aa)) is disordered. Positions 145 to 163 (PEEEIEEVEVSEEEGEDPA) are enriched in acidic residues. Phosphoserine is present on residues serine 155, serine 210, and serine 216.

Component of the U11/U12 snRNPs that are part of the U12-type spliceosome. Interacts with ZRSR1. As to expression, expressed at higher level in heart and testis, and at lower level in cerebellum. Weakly expressed at low level in liver.

Its subcellular location is the nucleus. The protein localises to the nucleoplasm. The protein is Zinc finger CCHC-type and RNA-binding motif-containing protein 1 (Zcrb1) of Mus musculus (Mouse).